Reading from the N-terminus, the 747-residue chain is ATPase family gene 2 protein homolog B (747 aa).

Met1 bears the N-acetylmethionine mark. ATP-binding positions include 234–241 and 500–507; these read GPPGVGKT and GPPGCAKT.

It belongs to the AAA ATPase family. AFG2 subfamily. In terms of assembly, part of the 55LCC heterohexameric ATPase complex composed at least of AIRIM, AFG2A, AFG2B and CINP. Associates with pre-60S ribosomal particles. As to expression, expressed in neurons; also expressed at lower level in astrocytes, oligodendrocytes and microglia.

The protein localises to the cytoplasm. It localises to the cytoskeleton. The protein resides in the spindle. Its subcellular location is the nucleus. It catalyses the reaction ATP + H2O = ADP + phosphate + H(+). Its activity is regulated as follows. In the context of 55LCC heterohexameric ATPase complex, the ATPase activity is stimulated by DNA binding and inhibited in presence of RNA. In terms of biological role, ATP-dependent chaperone part of the 55LCC heterohexameric ATPase complex which is chromatin-associated and promotes replisome proteostasis to maintain replication fork progression and genome stability. Required for replication fork progression, sister chromatid cohesion, and chromosome stability. The ATPase activity is specifically enhanced by replication fork DNA and is coupled to cysteine protease-dependent cleavage of replisome substrates in response to replication fork damage. Uses ATPase activity to process replisome substrates in S-phase, facilitating their proteolytic turnover from chromatin to ensure DNA replication and mitotic fidelity. Plays an essential role in the cytoplasmic maturation steps of pre-60S ribosomal particles by promoting the release of shuttling protein RSL24D1/RLP24 from the pre-ribosomal particles. In Rattus norvegicus (Rat), this protein is ATPase family gene 2 protein homolog B (Afg2b).